The following is a 265-amino-acid chain: Eukaryotic translation initiation factor 3 subunit J (265 aa).

Residues 24-34 (AGDEPILDSWD) are compositionally biased toward acidic residues. The segment at 24 to 74 (AGDEPILDSWDEEPKAKKEAAKPKPKPKAGGKKNAKGEEKKEQVLAIDELD) is disordered. The span at 35 to 45 (EEPKAKKEAAK) shows a compositional bias: basic and acidic residues. Positions 46–57 (PKPKPKAGGKKN) are enriched in basic residues. Coiled-coil stretches lie at residues 78 to 106 (RKEL…MAEE) and 190 to 220 (IENI…ARVK).

The protein belongs to the eIF-3 subunit J family. As to quaternary structure, component of the eukaryotic translation initiation factor 3 (eIF-3) complex.

The protein resides in the cytoplasm. Functionally, component of the eukaryotic translation initiation factor 3 (eIF-3) complex, which is involved in protein synthesis of a specialized repertoire of mRNAs and, together with other initiation factors, stimulates binding of mRNA and methionyl-tRNAi to the 40S ribosome. The eIF-3 complex specifically targets and initiates translation of a subset of mRNAs involved in cell proliferation. The chain is Eukaryotic translation initiation factor 3 subunit J from Candida glabrata (strain ATCC 2001 / BCRC 20586 / JCM 3761 / NBRC 0622 / NRRL Y-65 / CBS 138) (Yeast).